The sequence spans 159 residues: Ribosomal RNA large subunit methyltransferase H (159 aa).

S-adenosyl-L-methionine is bound by residues leucine 76, glycine 108, and 127–132; that span reads FGRMTL.

The protein belongs to the RNA methyltransferase RlmH family. As to quaternary structure, homodimer.

The protein localises to the cytoplasm. It catalyses the reaction pseudouridine(1915) in 23S rRNA + S-adenosyl-L-methionine = N(3)-methylpseudouridine(1915) in 23S rRNA + S-adenosyl-L-homocysteine + H(+). Functionally, specifically methylates the pseudouridine at position 1915 (m3Psi1915) in 23S rRNA. The protein is Ribosomal RNA large subunit methyltransferase H of Lactococcus lactis subsp. cremoris (strain SK11).